Consider the following 42-residue polypeptide: Photosystem II reaction center protein J (42 aa).

A helical membrane pass occupies residues 10–30 (IPLWLVGTVVGLLAIGLLALF).

The protein belongs to the PsbJ family. In terms of assembly, PSII is composed of 1 copy each of membrane proteins PsbA, PsbB, PsbC, PsbD, PsbE, PsbF, PsbH, PsbI, PsbJ, PsbK, PsbL, PsbM, PsbT, PsbX, PsbY, PsbZ, Psb30/Ycf12, at least 3 peripheral proteins of the oxygen-evolving complex and a large number of cofactors. It forms dimeric complexes.

It is found in the plastid. The protein resides in the chloroplast thylakoid membrane. One of the components of the core complex of photosystem II (PSII). PSII is a light-driven water:plastoquinone oxidoreductase that uses light energy to abstract electrons from H(2)O, generating O(2) and a proton gradient subsequently used for ATP formation. It consists of a core antenna complex that captures photons, and an electron transfer chain that converts photonic excitation into a charge separation. In Mesostigma viride (Green alga), this protein is Photosystem II reaction center protein J.